Reading from the N-terminus, the 574-residue chain is Serine hydroxymethyltransferase (574 aa).

180–182 (GHL) provides a ligand contact to (6S)-5,6,7,8-tetrahydrofolate. Lys-288 carries the post-translational modification N6-(pyridoxal phosphate)lysine. Glu-306 contributes to the (6S)-5,6,7,8-tetrahydrofolate binding site.

The protein belongs to the SHMT family. As to quaternary structure, homodimer. Pyridoxal 5'-phosphate is required as a cofactor.

It localises to the cytoplasm. It carries out the reaction (6R)-5,10-methylene-5,6,7,8-tetrahydrofolate + glycine + H2O = (6S)-5,6,7,8-tetrahydrofolate + L-serine. It participates in one-carbon metabolism; tetrahydrofolate interconversion. The protein operates within amino-acid biosynthesis; glycine biosynthesis; glycine from L-serine: step 1/1. In terms of biological role, catalyzes the reversible interconversion of serine and glycine with tetrahydrofolate (THF) serving as the one-carbon carrier. This reaction serves as the major source of one-carbon groups required for the biosynthesis of purines, thymidylate, methionine, and other important biomolecules. Also exhibits THF-independent aldolase activity toward beta-hydroxyamino acids, producing glycine and aldehydes, via a retro-aldol mechanism. The protein is Serine hydroxymethyltransferase of Treponema pallidum (strain Nichols).